Consider the following 227-residue polypeptide: UPF0173 metal-dependent hydrolase STK_14180 (227 aa).

This sequence belongs to the UPF0173 family.

In Sulfurisphaera tokodaii (strain DSM 16993 / JCM 10545 / NBRC 100140 / 7) (Sulfolobus tokodaii), this protein is UPF0173 metal-dependent hydrolase STK_14180.